The sequence spans 216 residues: uncharacterized protein (216 aa).

A helical transmembrane segment spans residues 7-29 (ILVIFFLIFFIGFEFSDMTLAFI).

It localises to the membrane. This is an uncharacterized protein from Archaeoglobus fulgidus (strain ATCC 49558 / DSM 4304 / JCM 9628 / NBRC 100126 / VC-16).